Here is a 185-residue protein sequence, read N- to C-terminus: Ribosome-recycling factor (185 aa).

Belongs to the RRF family.

It localises to the cytoplasm. Its function is as follows. Responsible for the release of ribosomes from messenger RNA at the termination of protein biosynthesis. May increase the efficiency of translation by recycling ribosomes from one round of translation to another. The sequence is that of Ribosome-recycling factor from Wigglesworthia glossinidia brevipalpis.